We begin with the raw amino-acid sequence, 295 residues long: Ribosomal RNA small subunit methyltransferase A (295 aa).

S-adenosyl-L-methionine is bound by residues Asn33, Val35, Gly60, Glu81, Asp111, and Asn129.

This sequence belongs to the class I-like SAM-binding methyltransferase superfamily. rRNA adenine N(6)-methyltransferase family. RsmA subfamily.

It localises to the cytoplasm. It carries out the reaction adenosine(1518)/adenosine(1519) in 16S rRNA + 4 S-adenosyl-L-methionine = N(6)-dimethyladenosine(1518)/N(6)-dimethyladenosine(1519) in 16S rRNA + 4 S-adenosyl-L-homocysteine + 4 H(+). In terms of biological role, specifically dimethylates two adjacent adenosines (A1518 and A1519) in the loop of a conserved hairpin near the 3'-end of 16S rRNA in the 30S particle. May play a critical role in biogenesis of 30S subunits. The sequence is that of Ribosomal RNA small subunit methyltransferase A from Streptomyces avermitilis (strain ATCC 31267 / DSM 46492 / JCM 5070 / NBRC 14893 / NCIMB 12804 / NRRL 8165 / MA-4680).